The following is a 220-amino-acid chain: Ribosomal RNA large subunit methyltransferase E (220 aa).

5 residues coordinate S-adenosyl-L-methionine: Gly-60, Trp-62, Asp-92, Asp-108, and Asp-133. Lys-173 functions as the Proton acceptor in the catalytic mechanism.

It belongs to the class I-like SAM-binding methyltransferase superfamily. RNA methyltransferase RlmE family.

It localises to the cytoplasm. It carries out the reaction uridine(2552) in 23S rRNA + S-adenosyl-L-methionine = 2'-O-methyluridine(2552) in 23S rRNA + S-adenosyl-L-homocysteine + H(+). Specifically methylates the uridine in position 2552 of 23S rRNA at the 2'-O position of the ribose in the fully assembled 50S ribosomal subunit. In Paraburkholderia phymatum (strain DSM 17167 / CIP 108236 / LMG 21445 / STM815) (Burkholderia phymatum), this protein is Ribosomal RNA large subunit methyltransferase E.